Consider the following 267-residue polypeptide: Probable beta-lactamase YbxI (267 aa).

An N-terminal signal peptide occupies residues 1–23; sequence MKKWIYVVLVLSIAGIGGFSVHA. Serine 76 acts as the Acyl-ester intermediate in catalysis. N6-carboxylysine is present on lysine 79. 214-216 contacts substrate; the sequence is KTG.

The protein belongs to the class-D beta-lactamase family.

It catalyses the reaction a beta-lactam + H2O = a substituted beta-amino acid. The protein is Probable beta-lactamase YbxI (ybxI) of Bacillus subtilis (strain 168).